A 512-amino-acid polypeptide reads, in one-letter code: Proline--tRNA ligase (512 aa).

Over residues 460 to 470 the composition is skewed to acidic residues; that stretch reads SDEDDEQDTTD. The disordered stretch occupies residues 460 to 484; it reads SDEDDEQDTTDENMGVNNDTTVESN.

The protein belongs to the class-II aminoacyl-tRNA synthetase family. ProS type 3 subfamily. In terms of assembly, homodimer.

The protein resides in the cytoplasm. It carries out the reaction tRNA(Pro) + L-proline + ATP = L-prolyl-tRNA(Pro) + AMP + diphosphate. In terms of biological role, catalyzes the attachment of proline to tRNA(Pro) in a two-step reaction: proline is first activated by ATP to form Pro-AMP and then transferred to the acceptor end of tRNA(Pro). This Haloquadratum walsbyi (strain DSM 16790 / HBSQ001) protein is Proline--tRNA ligase.